Consider the following 421-residue polypeptide: Imidazolonepropionase (421 aa).

The Fe(3+) site is built by histidine 81 and histidine 83. Residues histidine 81 and histidine 83 each coordinate Zn(2+). The 4-imidazolone-5-propanoate site is built by arginine 90, tyrosine 153, and histidine 186. Tyrosine 153 provides a ligand contact to N-formimidoyl-L-glutamate. Histidine 251 is a Fe(3+) binding site. Histidine 251 is a binding site for Zn(2+). Glutamate 254 serves as a coordination point for 4-imidazolone-5-propanoate. Fe(3+) is bound at residue aspartate 326. Residue aspartate 326 participates in Zn(2+) binding. Asparagine 328 and glycine 330 together coordinate N-formimidoyl-L-glutamate. Residue serine 331 participates in 4-imidazolone-5-propanoate binding.

Belongs to the metallo-dependent hydrolases superfamily. HutI family. The cofactor is Zn(2+). Fe(3+) is required as a cofactor.

Its subcellular location is the cytoplasm. It catalyses the reaction 4-imidazolone-5-propanoate + H2O = N-formimidoyl-L-glutamate. The protein operates within amino-acid degradation; L-histidine degradation into L-glutamate; N-formimidoyl-L-glutamate from L-histidine: step 3/3. Catalyzes the hydrolytic cleavage of the carbon-nitrogen bond in imidazolone-5-propanoate to yield N-formimidoyl-L-glutamate. It is the third step in the universal histidine degradation pathway. This is Imidazolonepropionase from Streptococcus pyogenes serotype M18 (strain MGAS8232).